Consider the following 307-residue polypeptide: Ribosomal RNA small subunit methyltransferase H (307 aa).

Residues 33 to 35 (AGH), Asp-52, Leu-83, Asp-97, and Gln-104 each bind S-adenosyl-L-methionine.

It belongs to the methyltransferase superfamily. RsmH family.

It is found in the cytoplasm. It carries out the reaction cytidine(1402) in 16S rRNA + S-adenosyl-L-methionine = N(4)-methylcytidine(1402) in 16S rRNA + S-adenosyl-L-homocysteine + H(+). Functionally, specifically methylates the N4 position of cytidine in position 1402 (C1402) of 16S rRNA. This is Ribosomal RNA small subunit methyltransferase H from Sulfurovum sp. (strain NBC37-1).